Reading from the N-terminus, the 73-residue chain is MPNSIFKKQLSPIKPGDPIDYKDVELLKKFITERGKILPRRMTGLTSKQQRDLTLAVKRARIVALLPFVNPEG.

This sequence belongs to the bacterial ribosomal protein bS18 family. Part of the 30S ribosomal subunit. Forms a tight heterodimer with protein bS6.

Binds as a heterodimer with protein bS6 to the central domain of the 16S rRNA, where it helps stabilize the platform of the 30S subunit. In Prochlorococcus marinus subsp. pastoris (strain CCMP1986 / NIES-2087 / MED4), this protein is Small ribosomal subunit protein bS18.